A 343-amino-acid chain; its full sequence is Dihydroorotase (343 aa).

Positions 13 and 15 each coordinate Zn(2+). Residues 15–17 and asparagine 41 each bind substrate; that span reads HLR. Residues lysine 99, histidine 136, and histidine 174 each contribute to the Zn(2+) site. Lysine 99 bears the N6-carboxylysine mark. Histidine 136 is a binding site for substrate. Residue leucine 219 participates in substrate binding. Aspartate 247 provides a ligand contact to Zn(2+). The active site involves aspartate 247. Substrate-binding residues include histidine 251 and alanine 263.

The protein belongs to the metallo-dependent hydrolases superfamily. DHOase family. Class II DHOase subfamily. As to quaternary structure, homodimer. Requires Zn(2+) as cofactor.

It catalyses the reaction (S)-dihydroorotate + H2O = N-carbamoyl-L-aspartate + H(+). It functions in the pathway pyrimidine metabolism; UMP biosynthesis via de novo pathway; (S)-dihydroorotate from bicarbonate: step 3/3. Catalyzes the reversible cyclization of carbamoyl aspartate to dihydroorotate. This is Dihydroorotase from Shewanella putrefaciens (strain CN-32 / ATCC BAA-453).